The sequence spans 76 residues: Small ribosomal subunit protein bS18 (76 aa).

The protein belongs to the bacterial ribosomal protein bS18 family. Part of the 30S ribosomal subunit. Forms a tight heterodimer with protein bS6.

Binds as a heterodimer with protein bS6 to the central domain of the 16S rRNA, where it helps stabilize the platform of the 30S subunit. The sequence is that of Small ribosomal subunit protein bS18 from Pseudomonas aeruginosa (strain LESB58).